Here is a 449-residue protein sequence, read N- to C-terminus: Amidophosphoribosyltransferase (449 aa).

The propeptide occupies 1 to 9; the sequence is MRGEIMKEK. Cys10 acts as the Nucleophile in catalysis. Positions 10 to 224 constitute a Glutamine amidotransferase type-2 domain; that stretch reads CGIFGAYSQD…PGEVIVVKDG (215 aa). Cys239 contributes to the [4Fe-4S] cluster binding site. Residues Ser286, Asp346, and Asp347 each coordinate Mg(2+). Positions 383, 432, and 435 each coordinate [4Fe-4S] cluster.

This sequence in the C-terminal section; belongs to the purine/pyrimidine phosphoribosyltransferase family. It depends on Mg(2+) as a cofactor. [4Fe-4S] cluster is required as a cofactor.

The catalysed reaction is 5-phospho-beta-D-ribosylamine + L-glutamate + diphosphate = 5-phospho-alpha-D-ribose 1-diphosphate + L-glutamine + H2O. It participates in purine metabolism; IMP biosynthesis via de novo pathway; N(1)-(5-phospho-D-ribosyl)glycinamide from 5-phospho-alpha-D-ribose 1-diphosphate: step 1/2. Functionally, catalyzes the formation of phosphoribosylamine from phosphoribosylpyrophosphate (PRPP) and glutamine. The chain is Amidophosphoribosyltransferase from Pyrococcus horikoshii (strain ATCC 700860 / DSM 12428 / JCM 9974 / NBRC 100139 / OT-3).